We begin with the raw amino-acid sequence, 510 residues long: Cytochrome P450 703A2 (510 aa).

Residues 2–22 (ILVLASLFAVLILNVLLWRWL) form a helical membrane-spanning segment. Cys451 contributes to the heme binding site.

Belongs to the cytochrome P450 family. It depends on heme as a cofactor.

It is found in the membrane. The enzyme catalyses dodecanoate + reduced [NADPH--hemoprotein reductase] + O2 = 7-hydroxydodecanoate + oxidized [NADPH--hemoprotein reductase] + H2O + H(+). Its function is as follows. Involved in pollen wall development. Catalyzes the conversion of medium-chain saturated fatty acids to the corresponding monohydroxylated fatty acids, with a preferential hydroxylation of lauric acid at the C-7 position. In-chain hydroxylated fatty acids, together with omega-hydroxylated fatty acids, are key monomeric aliphatic building blocks for sporopollenin synthesis during exine formation. The sequence is that of Cytochrome P450 703A2 from Arabidopsis thaliana (Mouse-ear cress).